We begin with the raw amino-acid sequence, 522 residues long: Acetylcholine receptor subunit delta (522 aa).

An N-terminal signal peptide occupies residues 1-21 (MGNIHFVYLLISCLYYSGCSG). At 22–245 (VNEEERLIND…VTFYLIIRRK (224 aa)) the chain is on the extracellular side. Asn-91, Asn-164, and Asn-229 each carry an N-linked (GlcNAc...) asparagine glycan. Cysteines 151 and 165 form a disulfide. The next 3 helical transmembrane spans lie at 246–270 (PLFY…AFYL), 278–295 (MSTA…LLLT), and 312–333 (YLMF…VLNF). The Cytoplasmic portion of the chain corresponds to 334-476 (HFRTPSTHVL…WNLVGQTIDR (143 aa)). Tyr-393 is subject to Phosphotyrosine; by Tyr-kinases. Residues 477 to 497 (LSMFIITPVMVLGTIFIFVMG) traverse the membrane as a helical segment.

This sequence belongs to the ligand-gated ion channel (TC 1.A.9) family. Acetylcholine receptor (TC 1.A.9.1) subfamily. In terms of assembly, pentamer of two alpha chains, and one each of the beta, delta, and gamma chains.

The protein localises to the postsynaptic cell membrane. The protein resides in the cell membrane. It carries out the reaction K(+)(in) = K(+)(out). The enzyme catalyses Na(+)(in) = Na(+)(out). After binding acetylcholine, the AChR responds by an extensive change in conformation that affects all subunits and leads to opening of an ion-conducting channel across the plasma membrane. The polypeptide is Acetylcholine receptor subunit delta (chrnd) (Tetronarce californica (Pacific electric ray)).